Here is a 689-residue protein sequence, read N- to C-terminus: Elongation factor G 1 (689 aa).

Residues 7–282 (DQVRTIGIIS…AVVDFLPSPL (276 aa)) enclose the tr-type G domain. GTP-binding positions include 16–23 (SHIDAGKT), 80–84 (DTPGH), and 134–137 (NKMD).

This sequence belongs to the TRAFAC class translation factor GTPase superfamily. Classic translation factor GTPase family. EF-G/EF-2 subfamily.

It localises to the cytoplasm. In terms of biological role, catalyzes the GTP-dependent ribosomal translocation step during translation elongation. During this step, the ribosome changes from the pre-translocational (PRE) to the post-translocational (POST) state as the newly formed A-site-bound peptidyl-tRNA and P-site-bound deacylated tRNA move to the P and E sites, respectively. Catalyzes the coordinated movement of the two tRNA molecules, the mRNA and conformational changes in the ribosome. The protein is Elongation factor G 1 of Geobacter sulfurreducens (strain ATCC 51573 / DSM 12127 / PCA).